Reading from the N-terminus, the 200-residue chain is RNA polymerase I-specific transcription initiation factor rrn11 (200 aa).

The protein localises to the nucleus. Subunit of a multiprotein complex essential for the initiation of rDNA transcription by RNA polymerase I. Binding to the DNA template is dependent on the initial binding of other factors. The chain is RNA polymerase I-specific transcription initiation factor rrn11 (rrn11) from Schizosaccharomyces pombe (strain 972 / ATCC 24843) (Fission yeast).